A 597-amino-acid polypeptide reads, in one-letter code: Putative heat shock protein HSP 90-beta-3 (597 aa).

Positions 46, 88, and 107 each coordinate ATP. The tract at residues 201–241 (DKEISDDEAEEEKGEKEEEDKDDEEKPKIKDVGSDEEDDSK) is disordered. A compositionally biased stretch (acidic residues) spans 204–223 (ISDDEAEEEKGEKEEEDKDD). Over residues 224–233 (EEKPKIKDVG) the composition is skewed to basic and acidic residues. Arginine 334 serves as a coordination point for ATP. Positions 414–446 (LELPEDEEEKKKMEESKEKFENLCKLMKEILDK) form a coiled coil. Positions 564–578 (DEDEVAAEEPSDAVP) are enriched in acidic residues. The segment at 564-597 (DEDEVAAEEPSDAVPDEIPPLEGDEDASRMEEVD) is disordered. Residues 593–597 (MEEVD) carry the TPR repeat-binding motif.

This sequence belongs to the heat shock protein 90 family. In terms of assembly, homodimer.

The protein localises to the cytoplasm. In terms of biological role, putative molecular chaperone that may promote the maturation, structural maintenance and proper regulation of specific target proteins. The protein is Putative heat shock protein HSP 90-beta-3 (HSP90AB3P) of Homo sapiens (Human).